A 188-amino-acid chain; its full sequence is MKASEMKKGSIVEYNNGTYQIRDIQRSSPQGRGGNVRFRFVMYSVPGGSKLEASFDADEMLTAVELLRREASFSYKDGEAFVFLDEEDYTLYTLEAEAIGDNAGYISEGLSGCYVQLIDASPVALQLPQHVVLEVVDTPPELKGGTATKRPKPAKLITGIEVMVPEYITTGERILVNTTTGAFGGRAS.

This sequence belongs to the elongation factor P family.

The protein is Elongation factor P-like protein of Xylella fastidiosa (strain 9a5c).